The chain runs to 156 residues: Small ribosomal subunit protein uS7 (156 aa).

This sequence belongs to the universal ribosomal protein uS7 family. As to quaternary structure, part of the 30S ribosomal subunit. Contacts proteins S9 and S11.

In terms of biological role, one of the primary rRNA binding proteins, it binds directly to 16S rRNA where it nucleates assembly of the head domain of the 30S subunit. Is located at the subunit interface close to the decoding center, probably blocks exit of the E-site tRNA. The chain is Small ribosomal subunit protein uS7 from Desulfovibrio desulfuricans (strain ATCC 27774 / DSM 6949 / MB).